The following is a 235-amino-acid chain: Probable transcriptional regulatory protein CJJ81176_1187 (235 aa).

It belongs to the TACO1 family.

It localises to the cytoplasm. This is Probable transcriptional regulatory protein CJJ81176_1187 from Campylobacter jejuni subsp. jejuni serotype O:23/36 (strain 81-176).